Here is a 490-residue protein sequence, read N- to C-terminus: Coagulation factor X (490 aa).

Positions methionine 1–serine 20 are cleaved as a signal peptide. A propeptide spanning residues glycine 21–arginine 40 is cleaved from the precursor. Positions alanine 41–valine 85 constitute a Gla domain. 6 positions are modified to 4-carboxyglutamate: glutamate 46, glutamate 47, glutamate 54, glutamate 56, glutamate 59, and glutamate 60. The cysteines at positions 57 and 62 are disulfide-linked. Residue asparagine 61 is glycosylated (N-linked (GlcNAc...) asparagine). 4-carboxyglutamate occurs at positions 65, 66, 69, 72, 75, and 79. The region spanning aspartate 86–glutamate 122 is the EGF-like 1; calcium-binding domain. 11 disulfides stabilise this stretch: cysteine 90/cysteine 101, cysteine 95/cysteine 110, cysteine 112/cysteine 121, cysteine 129/cysteine 140, cysteine 136/cysteine 149, cysteine 151/cysteine 164, cysteine 172/cysteine 340, cysteine 239/cysteine 244, cysteine 259/cysteine 275, cysteine 388/cysteine 402, and cysteine 413/cysteine 441. Position 103 is a (3R)-3-hydroxyaspartate (aspartate 103). The region spanning threonine 125–isoleucine 165 is the EGF-like 2 domain. Residues serine 183–leucine 230 form a disordered region. A propeptide spans proline 184–arginine 232 (activation peptide). Residues asparagine 187 and asparagine 205 are each glycosylated (N-linked (GlcNAc...) asparagine). The segment covering aspartate 203–proline 212 has biased composition (polar residues). The Peptidase S1 domain maps to isoleucine 233–arginine 465. Residues histidine 274 and aspartate 320 each act as charge relay system in the active site. Catalysis depends on serine 417, which acts as the Charge relay system.

The protein belongs to the peptidase S1 family. The two chains are formed from a single-chain precursor by the excision of two Arg residues and are held together by 1 or more disulfide bonds. Forms a heterodimer with SERPINA5. In terms of processing, the vitamin K-dependent, enzymatic carboxylation of some glutamate residues allows the modified protein to bind calcium. N- and O-glycosylated. Post-translationally, proteolytically cleaved and activated by cathepsin CTSG. The activation peptide is cleaved by factor IXa (in the intrinsic pathway), or by factor VIIa (in the extrinsic pathway). In terms of processing, the iron and 2-oxoglutarate dependent 3-hydroxylation of aspartate and asparagine is (R) stereospecific within EGF domains.

It localises to the secreted. It catalyses the reaction Selective cleavage of Arg-|-Thr and then Arg-|-Ile bonds in prothrombin to form thrombin.. Its activity is regulated as follows. Inhibited by SERPINA5. In terms of biological role, factor Xa is a vitamin K-dependent glycoprotein that converts prothrombin to thrombin in the presence of factor Va, calcium and phospholipid during blood clotting. Factor Xa activates pro-inflammatory signaling pathways in a protease-activated receptor (PAR)-dependent manner. This Oryctolagus cuniculus (Rabbit) protein is Coagulation factor X (F10).